A 173-amino-acid polypeptide reads, in one-letter code: Translation initiation factor IF-3 (173 aa).

Belongs to the IF-3 family. Monomer.

Its subcellular location is the cytoplasm. In terms of biological role, IF-3 binds to the 30S ribosomal subunit and shifts the equilibrium between 70S ribosomes and their 50S and 30S subunits in favor of the free subunits, thus enhancing the availability of 30S subunits on which protein synthesis initiation begins. This Ehrlichia chaffeensis (strain ATCC CRL-10679 / Arkansas) protein is Translation initiation factor IF-3.